The primary structure comprises 501 residues: Nuclear receptor subfamily 5 group A member 2 (501 aa).

Positions 43-114 form a DNA-binding region, nuclear receptor; the sequence is EELCPVCGDK…KCLSVGMKLE (72 aa). Positions 46, 49, 63, 66, 82, 88, 98, and 101 each coordinate Zn(2+). 2 consecutive NR C4-type zinc fingers follow at residues 46–66 and 82–106; these read CPVCGDKVSGYHYGLLTCESC and CIENQNCQIDKTQRKRCPYCRFQKC. A C-terminal extension (CTE) region spans residues 112-127; it reads KLEAVRADRMRGGRNK. The FTZ-F1 box signature appears at 128–147; it reads FGPMYKRDRALKQQKKALIR. The segment at 186–207 is disordered; the sequence is NHTALPPTDYDRSPFVTSPISM. The region spanning 260-499 is the NR LBD domain; the sequence is SIPHLILELQ…NLLIEMLHAK (240 aa). A phospholipid derivative is bound by residues 381–384, Tyr-476, and Lys-480; that span reads GATL. Residues 488–499 are AF-2; sequence CNNLLIEMLHAK.

The protein belongs to the nuclear hormone receptor family. NR5 subfamily. Monomer; Binds DNA as a monomer. In terms of tissue distribution, detected in liver and adrenal gland.

It is found in the nucleus. The protein resides in the chromosome. Functionally, orphan nuclear receptor that binds DNA as a monomer to the 5'-TCAAGGCCA-3' sequence and controls expression of target genes: regulates key biological processes, such as cholesterol and bile acid synthesis pathways, as well as cartilage, liver and pancreas morphogenesis. Ligand-binding causes conformational change which causes recruitment of coactivators, promoting target gene activation. The specific ligand is unknown, but specific phospholipids, such as phosphatidylethanolamine, phosphatidylserine, dilauroyl phosphatidylcholine and diundecanoyl phosphatidylcholine can act as ligand in vitro. Acts as a pioneer transcription factor, which unwraps target DNA from histones and elicits local opening of closed chromatin. Involved in the formation of connective tissue in lower jaw. This Gallus gallus (Chicken) protein is Nuclear receptor subfamily 5 group A member 2.